A 380-amino-acid chain; its full sequence is Zinc metalloproteinase-like protein nas-21 (380 aa).

The first 24 residues, 1–24, serve as a signal peptide directing secretion; that stretch reads MNYFITFFFMHIAVLNFYFRFSNG. Positions 46–234 constitute a Peptidase M12A domain; that stretch reads QALRMDNEPR…LMINEYYQCS (189 aa). The N-linked (GlcNAc...) asparagine glycan is linked to asparagine 87. 2 disulfide bridges follow: cysteine 90–cysteine 233 and cysteine 110–cysteine 130. Glutamate 138 is an active-site residue. N-linked (GlcNAc...) asparagine glycosylation is found at asparagine 253, asparagine 269, asparagine 283, and asparagine 304.

It localises to the secreted. Its function is as follows. May lack metalloprotease activity. The chain is Zinc metalloproteinase-like protein nas-21 (nas-21) from Caenorhabditis elegans.